A 205-amino-acid polypeptide reads, in one-letter code: Large ribosomal subunit protein bL25 (205 aa).

The tract at residues 180–205 (HEEVAEEAEETEGEDAEEAPAAEGEE) is disordered. Over residues 183 to 205 (VAEEAEETEGEDAEEAPAAEGEE) the composition is skewed to acidic residues.

Belongs to the bacterial ribosomal protein bL25 family. CTC subfamily. Part of the 50S ribosomal subunit; part of the 5S rRNA/L5/L18/L25 subcomplex. Contacts the 5S rRNA. Binds to the 5S rRNA independently of L5 and L18.

Functionally, this is one of the proteins that binds to the 5S RNA in the ribosome where it forms part of the central protuberance. The chain is Large ribosomal subunit protein bL25 from Corynebacterium diphtheriae (strain ATCC 700971 / NCTC 13129 / Biotype gravis).